We begin with the raw amino-acid sequence, 169 residues long: Macrocypin-1a (169 aa).

Belongs to the protease inhibitor I85 family.

In terms of biological role, inhibits papain and cysteine cathepsin endopeptidases, and also inhibits cathepsins B and H, which exhibit both exopeptidase and endopeptidase activities. This Macrolepiota procera (Parasol mushroom) protein is Macrocypin-1a.